A 931-amino-acid chain; its full sequence is Protein translocase subunit SecA (931 aa).

ATP-binding positions include Q87, 105-109 (GEGKT), and D515. C915, C917, C926, and H927 together coordinate Zn(2+).

Belongs to the SecA family. As to quaternary structure, monomer and homodimer. Part of the essential Sec protein translocation apparatus which comprises SecA, SecYEG and auxiliary proteins SecDF-YajC and YidC. Requires Zn(2+) as cofactor.

The protein localises to the cell inner membrane. The protein resides in the cytoplasm. It carries out the reaction ATP + H2O + cellular proteinSide 1 = ADP + phosphate + cellular proteinSide 2.. Its function is as follows. Part of the Sec protein translocase complex. Interacts with the SecYEG preprotein conducting channel. Has a central role in coupling the hydrolysis of ATP to the transfer of proteins into and across the cell membrane, serving both as a receptor for the preprotein-SecB complex and as an ATP-driven molecular motor driving the stepwise translocation of polypeptide chains across the membrane. The polypeptide is Protein translocase subunit SecA (Burkholderia ambifaria (strain ATCC BAA-244 / DSM 16087 / CCUG 44356 / LMG 19182 / AMMD) (Burkholderia cepacia (strain AMMD))).